Here is a 243-residue protein sequence, read N- to C-terminus: Peptidase E (243 aa).

Active-site charge relay system residues include Ser-118, Asp-133, and His-155.

Belongs to the peptidase S51 family.

It is found in the cytoplasm. It carries out the reaction Dipeptidase E catalyzes the hydrolysis of dipeptides Asp-|-Xaa. It does not act on peptides with N-terminal Glu, Asn or Gln, nor does it cleave isoaspartyl peptides.. Functionally, hydrolyzes dipeptides containing N-terminal aspartate residues. May play a role in allowing the cell to use peptide aspartate to spare carbon otherwise required for the synthesis of the aspartate family of amino acids. The sequence is that of Peptidase E from Streptomyces coelicolor (strain ATCC BAA-471 / A3(2) / M145).